The chain runs to 58 residues: uncharacterized protein (58 aa).

Disordered stretches follow at residues Met1–Lys20 and Ile38–Gln58.

This is an uncharacterized protein from Bacillus subtilis (strain 168).